Consider the following 269-residue polypeptide: Aegyptin-like protein (269 aa).

Positions 1–19 are cleaved as a signal peptide; the sequence is MKLLLLLASVLCLALIVSA. The tract at residues 19–152 is disordered; that stretch reads ARPSDETTDQ…GGAEGGEESP (134 aa). The GE-rich region which mediates binding of Ca(2+) stretch occupies residues 38–148; that stretch reads TSDSYHQEED…AGEEGGAEGG (111 aa). 3 stretches are compositionally biased toward acidic residues: residues 56-73, 98-121, and 131-149; these read GTEDGNSEDDSSELESSS, GEEDEAGEEGEAGEEGEAGEEGGA, and GGADEEGSAGEEGGAEGGE. Residues 148-269 are mediates binding of host collagen and inhibition of platelet aggregation; that stretch reads GEESPVNTYH…DCIVEKRDSE (122 aa). Disulfide bonds link C208–C261 and C230–C239.

It belongs to the aegyptin family. In terms of tissue distribution, female saliva (at protein level). Distal lateral lobes of female salivary gland (at protein level). Low-level expression in male salivary gland. Not detected in female and male carcasses.

The protein localises to the secreted. Its function is as follows. Modulates blood feeding of female mosquitoes on vertebrate hosts. Inhibits collagen-induced platelet aggregation in the host via preventing collagen interaction with its ligands: glycoprotein VI and integrin alpha-2/beta-1 (ITGA2/ITGB1). Inhibits collagen-induced increase of Ca(2+) levels in host platelets. Binds to host collagens. Binds Ca(2+). Prevents a decrease in platelet count in the host blood after collagen injection. (Microbial infection) Does not affect the development of Plasmodium berghei parasites in mosquitoes. In Anopheles stephensi (Indo-Pakistan malaria mosquito), this protein is Aegyptin-like protein.